We begin with the raw amino-acid sequence, 296 residues long: 4-hydroxy-tetrahydrodipicolinate synthase (296 aa).

Residue T49 coordinates pyruvate. The active-site Proton donor/acceptor is the Y137. K166 functions as the Schiff-base intermediate with substrate in the catalytic mechanism. Position 208 (I208) interacts with pyruvate.

The protein belongs to the DapA family. As to quaternary structure, homotetramer; dimer of dimers.

Its subcellular location is the cytoplasm. It catalyses the reaction L-aspartate 4-semialdehyde + pyruvate = (2S,4S)-4-hydroxy-2,3,4,5-tetrahydrodipicolinate + H2O + H(+). Its pathway is amino-acid biosynthesis; L-lysine biosynthesis via DAP pathway; (S)-tetrahydrodipicolinate from L-aspartate: step 3/4. Its function is as follows. Catalyzes the condensation of (S)-aspartate-beta-semialdehyde [(S)-ASA] and pyruvate to 4-hydroxy-tetrahydrodipicolinate (HTPA). This is 4-hydroxy-tetrahydrodipicolinate synthase from Chlorobium luteolum (strain DSM 273 / BCRC 81028 / 2530) (Pelodictyon luteolum).